The following is a 593-amino-acid chain: MAIDPQPSSPSLSSETIANDTIGNDNNVNEPSVEPKTQEHQHTVPPRLSRIYSQAHHISKSFIDQNYPGEGTTQAPYRINFLPDDSQNAQLLPRWKKWAFVLLQSLACLATTFASSAYSGGIKQIIRAFGISQEVATLGISLYVLGFTFGPLVWAPLSELYGRKKVFFFTFMVATAFSAGAAGAGSIASLLVLRFLTGSIGSAPLSNAPALIADMFDKSERGLAMCMFSGAPFLGPAIGPIAGGFLGETAGWRWLHGLMAAFTGVTWIACTVFIPETYAPYILRKRAQHMSKLTGKVYISTLDADKPPSSAAHQLKNALTRPWLLLFKEPIVFITSIYISIIYGTMYMCFAAFPIVFQQGRGWSQGIGGLAFTGIVIGVILSIISFAFEDKRYARAARSRGAPMEPEDRLPPAIMGSLLIPIGLFWFAWTTFPSIHWIVPIIGTVFFAWGLVLVFMALLNYLIDSYVIFAASIMAANSALRSLFGAAFPLFTRQMYDGLGVQWASSIPAFLALACVPFPFLFYKYGRQIRMKCEYAAEAANVLQKMRSLHVAVTEDDAMNEAEEMWRARTHNSHASAAHSHGHRRSLSYTRSA.

The disordered stretch occupies residues 1–45; it reads MAIDPQPSSPSLSSETIANDTIGNDNNVNEPSVEPKTQEHQHTVP. The segment covering 9 to 30 has biased composition (polar residues); sequence SPSLSSETIANDTIGNDNNVNE. A glycan (N-linked (GlcNAc...) asparagine) is linked at N19. A run of 12 helical transmembrane segments spans residues 98 to 118, 135 to 155, 167 to 187, 195 to 215, 227 to 247, 254 to 274, 337 to 357, 367 to 387, 410 to 430, 438 to 458, 468 to 488, and 503 to 523; these read WAFV…SSAY, VATL…LVWA, FFFT…AGSI, FLTG…IADM, MFSG…GFLG, WLHG…TVFI, IYIS…PIVF, IGGL…ISFA, LPPA…FAWT, IVPI…FMAL, IFAA…GAAF, and WASS…FLFY. The tract at residues 570–593 is disordered; that stretch reads THNSHASAAHSHGHRRSLSYTRSA.

It belongs to the major facilitator superfamily. DHA1 family. Polyamines/proton antiporter (TC 2.A.1.2.16) subfamily.

The protein localises to the cell membrane. In terms of biological role, efflux pump involved in export of fusaric acid, a mycotoxin with low to moderate toxicity to animals and humans, but with high phytotoxic properties. Constitutes a self-protecting mechanism of the fungus against critical levels of FSA within the cell. This is Efflux pump FUB11 from Gibberella moniliformis (strain M3125 / FGSC 7600) (Maize ear and stalk rot fungus).